Reading from the N-terminus, the 417-residue chain is Probable tubulin polyglutamylase ttll-9 (417 aa).

The TTL domain occupies 23-372; that stretch reads QRKKKILFKC…EKKLIGNENE (350 aa). Residues 188 to 191, lysine 201, and aspartate 203 each bind ATP; that span reads QCYV.

The protein belongs to the tubulin--tyrosine ligase family. Expressed in head sensory neurons.

Its function is as follows. Polyglutamylase that forms polyglutamate side chains on tubulin. Acts when complexed with other proteins. Appears to be dispensable for polar spindle formation in dividing embryonic cells, for cilia-dependent osmotic avoidance and for male mating behavior. Probably by regulating microtubule stability via the glutamylation of tubulin, regulates PLM axon developmental growth. The polypeptide is Probable tubulin polyglutamylase ttll-9 (Caenorhabditis elegans).